The following is a 521-amino-acid chain: U4/U6 small nuclear ribonucleoprotein Prp4 (521 aa).

K26 bears the N6-acetyllysine mark. WD repeat units lie at residues 228–267 (GDDRPISYCHFSPNSKMLATACWSGLCKLWSVPDCNLLHT), 270–317 (GHNT…PVAD), 320–359 (GHTVRVARVMWHPSGRFLGTTCYDRSWRLWDLEAQEEILH), 362–401 (GHSMGVYDIAFHQDGSLAGTGGLDAFGRVWDLRTGRCIMF), 404–443 (GHLKEIYGINFSPNGYHIATGSGDNTCKVWDLRQRRCVYT), 446–486 (AHQN…PLKT), and 489–521 (GHEGKVMGLDISSDGQLIATCSYDRTFKLWMAE).

Component of the precatalytic spliceosome (spliceosome B complex). Component of the U4/U6-U5 tri-snRNP complex, a building block of the precatalytic spliceosome (spliceosome B complex). The U4/U6-U5 tri-snRNP complex is composed of the U4, U6 and U5 snRNAs and at least PRPF3, PRPF4, PRPF6, PRPF8, PRPF31, SNRNP200, TXNL4A, SNRNP40, SNRPB, SNRPD1, SNRPD2, SNRPD3, SNRPE, SNRPF, SNRPG, DDX23, CD2BP2, PPIH, SNU13, EFTUD2, SART1 and USP39, plus LSM2, LSM3, LSM4, LSM5, LSM6, LSM7 and LSM8. Interacts directly with PRPF18, PPIH and PRPF3. Part of a heteromeric complex containing PPIH, PRPF3 and PRPF4 that is stable in the absence of RNA. Interacts with ERCC6.

It is found in the nucleus. The protein localises to the nucleus speckle. Plays a role in pre-mRNA splicing as component of the U4/U6-U5 tri-snRNP complex that is involved in spliceosome assembly, and as component of the precatalytic spliceosome (spliceosome B complex). This chain is U4/U6 small nuclear ribonucleoprotein Prp4 (PRPF4), found in Pongo abelii (Sumatran orangutan).